The following is a 464-amino-acid chain: Molybdate transporter 2 (464 aa).

Residues 8 to 9 (LL) carry the Tonoplast targeting signal motif. The next 9 membrane-spanning stretches (helical) occupy residues 33-53 (LSGA…LTLV), 62-82 (LIFT…PMPV), 116-136 (LLLG…LPVV), 172-192 (IWLG…IILS), 223-243 (LLSS…LCFI), 309-329 (VSIS…MPVC), 348-368 (SVIF…NSFV), 374-394 (FPIG…AMAS), and 404-424 (FIML…LGFG).

It belongs to the SLC26A/SulP transporter (TC 2.A.53) family. Expressed in leaves. Not detected in roots, shoots and seeds.

Its subcellular location is the vacuole membrane. Molybdate transporter required for vacuolar molybdate export during senescence. In Arabidopsis thaliana (Mouse-ear cress), this protein is Molybdate transporter 2 (MOT2).